Consider the following 293-residue polypeptide: 4-hydroxy-tetrahydrodipicolinate synthase (293 aa).

T47 contacts pyruvate. Catalysis depends on Y135, which acts as the Proton donor/acceptor. K163 acts as the Schiff-base intermediate with substrate in catalysis. Position 204 (I204) interacts with pyruvate.

It belongs to the DapA family. As to quaternary structure, homotetramer; dimer of dimers.

The protein localises to the cytoplasm. The catalysed reaction is L-aspartate 4-semialdehyde + pyruvate = (2S,4S)-4-hydroxy-2,3,4,5-tetrahydrodipicolinate + H2O + H(+). It functions in the pathway amino-acid biosynthesis; L-lysine biosynthesis via DAP pathway; (S)-tetrahydrodipicolinate from L-aspartate: step 3/4. Catalyzes the condensation of (S)-aspartate-beta-semialdehyde [(S)-ASA] and pyruvate to 4-hydroxy-tetrahydrodipicolinate (HTPA). The protein is 4-hydroxy-tetrahydrodipicolinate synthase of Brachyspira hyodysenteriae (strain ATCC 49526 / WA1).